The chain runs to 644 residues: Polyglycine hydrolase (644 aa).

The N-terminal stretch at 1–23 (MYTSRSLFSTLASCLSLATLVAS) is a signal peptide. N-linked (GlcNAc...) asparagine glycosylation is found at N100, N144, N159, N244, and N340. C149 and C183 form a disulfide bridge. The active site involves S369. N-linked (GlcNAc...) asparagine glycans are attached at residues N389, N410, N443, and N486.

The protein belongs to the peptidase S12 family.

The protein resides in the secreted. The catalysed reaction is a glycyl-glycyl-[protein] + H2O = N-terminal glycyl-[protein] + [protein]-C-terminal glycine. Its activity is regulated as follows. Not inhibited by phenylmethylsulfonyl fluoride (PMSF; serine peptidase class S1 inhibitor), clavulanic acid (beta-lactamase inhibitor) or ampicillin (penicillin-binding protein (PBP) inhibitor). Functionally, serine-type endopeptidase that cleaves Gly-Gly bonds in the polyglycine linker of host plant class IV chitinases to disrupt their chitin-binding, and thereby plays a role in lowering the defense responses of the host to the fungus. Degrades Z.mays Endochitinase A (CHIA). Has low proteolytic activity on Z.mays Endochitinase B (CHIB). This chain is Polyglycine hydrolase, found in Cochliobolus carbonum (strain 26-R-13) (Maize leaf spot fungus).